The chain runs to 438 residues: Aspartate--tRNA(Asp/Asn) ligase (438 aa).

Glu176 provides a ligand contact to L-aspartate. Residues 198–201 (QLYK) are aspartate. Residue Arg220 coordinates L-aspartate. Residues 220–222 (RAE), 228–230 (RHL), and Glu361 contribute to the ATP site. Mg(2+) is bound by residues Glu361 and Ser364. Residues Ser364 and Arg368 each contribute to the L-aspartate site. Residue 409-412 (GADR) participates in ATP binding.

This sequence belongs to the class-II aminoacyl-tRNA synthetase family. Type 2 subfamily. In terms of assembly, homodimer. Requires Mg(2+) as cofactor.

The protein resides in the cytoplasm. It carries out the reaction tRNA(Asx) + L-aspartate + ATP = L-aspartyl-tRNA(Asx) + AMP + diphosphate. Its function is as follows. Aspartyl-tRNA synthetase with relaxed tRNA specificity since it is able to aspartylate not only its cognate tRNA(Asp) but also tRNA(Asn). Reaction proceeds in two steps: L-aspartate is first activated by ATP to form Asp-AMP and then transferred to the acceptor end of tRNA(Asp/Asn). This Methanococcus maripaludis (strain DSM 14266 / JCM 13030 / NBRC 101832 / S2 / LL) protein is Aspartate--tRNA(Asp/Asn) ligase.